A 78-amino-acid polypeptide reads, in one-letter code: Large ribosomal subunit protein bL28 (78 aa).

Belongs to the bacterial ribosomal protein bL28 family.

In Trichormus variabilis (strain ATCC 29413 / PCC 7937) (Anabaena variabilis), this protein is Large ribosomal subunit protein bL28.